The chain runs to 113 residues: Gigasin-5 (113 aa).

As to expression, component of the organic matrix of calcified shell layers.

This chain is Gigasin-5, found in Magallana gigas (Pacific oyster).